Consider the following 442-residue polypeptide: Histidine--tRNA ligase (442 aa).

It belongs to the class-II aminoacyl-tRNA synthetase family. Homodimer.

It is found in the cytoplasm. It catalyses the reaction tRNA(His) + L-histidine + ATP = L-histidyl-tRNA(His) + AMP + diphosphate + H(+). The polypeptide is Histidine--tRNA ligase (Helicobacter pylori (strain HPAG1)).